Reading from the N-terminus, the 274-residue chain is uncharacterized protein (274 aa).

The 139-residue stretch at 3–141 folds into the C2 NT-type domain; the sequence is IFIPKARRPT…TIRIGISLKQ (139 aa).

The protein to yeast YBL086c.

This is an uncharacterized protein from Schizosaccharomyces pombe (strain 972 / ATCC 24843) (Fission yeast).